The following is a 275-amino-acid chain: 3-methyl-2-oxobutanoate hydroxymethyltransferase (275 aa).

Positions 49 and 88 each coordinate Mg(2+). Residues 49 to 50 (DS), aspartate 88, and lysine 118 contribute to the 3-methyl-2-oxobutanoate site. Glutamate 120 serves as a coordination point for Mg(2+). The active-site Proton acceptor is the glutamate 187.

This sequence belongs to the PanB family. Homodecamer; pentamer of dimers. Mg(2+) is required as a cofactor.

The protein resides in the cytoplasm. The enzyme catalyses 3-methyl-2-oxobutanoate + (6R)-5,10-methylene-5,6,7,8-tetrahydrofolate + H2O = 2-dehydropantoate + (6S)-5,6,7,8-tetrahydrofolate. Its pathway is cofactor biosynthesis; (R)-pantothenate biosynthesis; (R)-pantoate from 3-methyl-2-oxobutanoate: step 1/2. In terms of biological role, catalyzes the reversible reaction in which hydroxymethyl group from 5,10-methylenetetrahydrofolate is transferred onto alpha-ketoisovalerate to form ketopantoate. In Hyphomonas neptunium (strain ATCC 15444), this protein is 3-methyl-2-oxobutanoate hydroxymethyltransferase.